Here is a 268-residue protein sequence, read N- to C-terminus: Zinc finger protein SNAI2 (268 aa).

Residues 1-20 (MPRSFLVKKHFNASKKPNYS) form an SNAG domain region. Residues 80-117 (SSSLGRVSPPPPSDTSSKDHSGSESPISDEEERLQSKL) are disordered. 4 C2H2-type zinc fingers span residues 128–150 (FQCNLCNKTYSTFSGLAKHKQLH), 159–181 (FSCKYCDKEYVSLGALKMHIRTH), 185–207 (CVCKICGKAFSRPWLLQGHIRTH), and 213–235 (FSCPHCNRAFADRSNLRAHLQTH). A C2H2-type 5; atypical zinc finger spans residues 241–264 (YQCKNCSKTFSRMSLLHKHEESGC).

This sequence belongs to the snail C2H2-type zinc-finger protein family. As to quaternary structure, interacts (via SNAG domain) with LIMD1 (via LIM domains), WTIP (via LIM domains) and AJUBA (via LIM domains). Interacts (via zinc fingers) with KPNA2, KPNB1, and TNPO1. May interact (via zinc fingers) with IPO7. In terms of processing, phosphorylated by GSK3B. Once phosphorylated, it becomes a target for ubiquitination. Ubiquitinated by the SCF(FBXO11) complex; ubiquitination requires previous GSK3B-mediated SNAI2 phosphorylation. In terms of tissue distribution, expressed in most adult human tissues, including spleen, thymus, prostate, testis, ovary, small intestine, colon, heart, brain, placenta, lung, liver, skeletal muscle, kidney and pancreas. Not detected in peripheral blood leukocyte. Expressed in the dermis and in all layers of the epidermis, with high levels of expression in the basal layers (at protein level). Expressed in osteoblasts (at protein level). Expressed in mesenchymal stem cells (at protein level). Expressed in breast tumor cells (at protein level).

The protein localises to the nucleus. The protein resides in the cytoplasm. Transcriptional repressor that modulates both activator-dependent and basal transcription. Involved in the generation and migration of neural crest cells. Plays a role in mediating RAF1-induced transcriptional repression of the TJ protein, occludin (OCLN) and subsequent oncogenic transformation of epithelial cells. Represses BRCA2 expression by binding to its E2-box-containing silencer and recruiting CTBP1 and HDAC1 in breast cells. In epidermal keratinocytes, binds to the E-box in ITGA3 promoter and represses its transcription. Involved in the regulation of ITGB1 and ITGB4 expression and cell adhesion and proliferation in epidermal keratinocytes. Binds to E-box2 domain of BSG and activates its expression during TGFB1-induced epithelial-mesenchymal transition (EMT) in hepatocytes. Represses E-Cadherin/CDH1 transcription via E-box elements. Involved in osteoblast maturation. Binds to RUNX2 and SOC9 promoters and may act as a positive and negative transcription regulator, respectively, in osteoblasts. Binds to CXCL12 promoter via E-box regions in mesenchymal stem cells and osteoblasts. Plays an essential role in TWIST1-induced EMT and its ability to promote invasion and metastasis. This chain is Zinc finger protein SNAI2 (SNAI2), found in Homo sapiens (Human).